The primary structure comprises 274 residues: Protein A11 homolog (274 aa).

A coiled-coil region spans residues 106–136; the sequence is DDNKRVHLLEQEIAELRKKKTKSKNLLDFTN.

It belongs to the poxviridae A11 family. As to quaternary structure, homomultimer. Interacts with A32. Phosphorylated by a F10-independent mechanism.

The protein localises to the host cytoplasm. Its function is as follows. Required for viral crescent formation early during virus morphogenesis. The polypeptide is Protein A11 homolog (Fowlpox virus (strain NVSL) (FPV)).